A 353-amino-acid chain; its full sequence is Photosystem II protein D1 (353 aa).

Thr2 is modified (N-acetylthreonine). A Phosphothreonine modification is found at Thr2. 3 helical membrane passes run 29–46 (YIGW…TATS), 118–133 (HFLL…EWEL), and 142–156 (WIAV…AATA). Residue His118 coordinates chlorophyll a. Tyr126 contributes to the pheophytin a binding site. 2 residues coordinate [CaMn4O5] cluster: Asp170 and Glu189. A helical transmembrane segment spans residues 197-218 (FHMLGVAGVFGGSLFSAMHGSL). Position 198 (His198) interacts with chlorophyll a. Residues His215 and 264–265 (SF) each bind a quinone. Residue His215 coordinates Fe cation. His272 serves as a coordination point for Fe cation. A helical membrane pass occupies residues 274-288 (FLAAWPVVGIWFTAL). The [CaMn4O5] cluster site is built by His332, Glu333, Asp342, and Ala344. Residues 345–353 (AVEAPAVNG) constitute a propeptide that is removed on maturation.

It belongs to the reaction center PufL/M/PsbA/D family. As to quaternary structure, PSII is composed of 1 copy each of membrane proteins PsbA, PsbB, PsbC, PsbD, PsbE, PsbF, PsbH, PsbI, PsbJ, PsbK, PsbL, PsbM, PsbT, PsbX, PsbY, PsbZ, Psb30/Ycf12, at least 3 peripheral proteins of the oxygen-evolving complex and a large number of cofactors. It forms dimeric complexes. Requires The D1/D2 heterodimer binds P680, chlorophylls that are the primary electron donor of PSII, and subsequent electron acceptors. It shares a non-heme iron and each subunit binds pheophytin, quinone, additional chlorophylls, carotenoids and lipids. D1 provides most of the ligands for the Mn4-Ca-O5 cluster of the oxygen-evolving complex (OEC). There is also a Cl(-1) ion associated with D1 and D2, which is required for oxygen evolution. The PSII complex binds additional chlorophylls, carotenoids and specific lipids. as cofactor. In terms of processing, tyr-161 forms a radical intermediate that is referred to as redox-active TyrZ, YZ or Y-Z. C-terminally processed by CTPA; processing is essential to allow assembly of the oxygen-evolving complex and thus photosynthetic growth.

It localises to the plastid. The protein resides in the chloroplast thylakoid membrane. It catalyses the reaction 2 a plastoquinone + 4 hnu + 2 H2O = 2 a plastoquinol + O2. Functionally, photosystem II (PSII) is a light-driven water:plastoquinone oxidoreductase that uses light energy to abstract electrons from H(2)O, generating O(2) and a proton gradient subsequently used for ATP formation. It consists of a core antenna complex that captures photons, and an electron transfer chain that converts photonic excitation into a charge separation. The D1/D2 (PsbA/PsbD) reaction center heterodimer binds P680, the primary electron donor of PSII as well as several subsequent electron acceptors. In Conocephalum conicum (Snakeskin liverwort), this protein is Photosystem II protein D1.